We begin with the raw amino-acid sequence, 197 residues long: Imidazoleglycerol-phosphate dehydratase (197 aa).

This sequence belongs to the imidazoleglycerol-phosphate dehydratase family.

The protein localises to the cytoplasm. The enzyme catalyses D-erythro-1-(imidazol-4-yl)glycerol 3-phosphate = 3-(imidazol-4-yl)-2-oxopropyl phosphate + H2O. It participates in amino-acid biosynthesis; L-histidine biosynthesis; L-histidine from 5-phospho-alpha-D-ribose 1-diphosphate: step 6/9. This Teredinibacter turnerae (strain ATCC 39867 / T7901) protein is Imidazoleglycerol-phosphate dehydratase.